The chain runs to 292 residues: Ribosomal RNA small subunit methyltransferase H (292 aa).

Residues G32–H34, D51, L87, D101, and Q108 each bind S-adenosyl-L-methionine.

Belongs to the methyltransferase superfamily. RsmH family.

It localises to the cytoplasm. The catalysed reaction is cytidine(1402) in 16S rRNA + S-adenosyl-L-methionine = N(4)-methylcytidine(1402) in 16S rRNA + S-adenosyl-L-homocysteine + H(+). Specifically methylates the N4 position of cytidine in position 1402 (C1402) of 16S rRNA. In Pseudothermotoga lettingae (strain ATCC BAA-301 / DSM 14385 / NBRC 107922 / TMO) (Thermotoga lettingae), this protein is Ribosomal RNA small subunit methyltransferase H.